Here is a 569-residue protein sequence, read N- to C-terminus: Urease subunit alpha (569 aa).

Residues H136, H138, and K219 each coordinate Ni(2+). K219 bears the N6-carboxylysine mark. Substrate is bound at residue H221. Ni(2+) is bound by residues H248 and H274. H322 (proton donor) is an active-site residue. D362 contributes to the Ni(2+) binding site.

Belongs to the metallo-dependent hydrolases superfamily. Urease alpha subunit family. Heterotrimer of UreA (gamma), UreB (beta) and UreC (alpha) subunits. Three heterotrimers associate to form the active enzyme. The cofactor is Ni cation. Post-translationally, carboxylation allows a single lysine to coordinate two nickel ions.

It is found in the cytoplasm. It carries out the reaction urea + 2 H2O + H(+) = hydrogencarbonate + 2 NH4(+). It functions in the pathway nitrogen metabolism; urea degradation; CO(2) and NH(3) from urea (urease route): step 1/1. The chain is Urease subunit alpha from Microcystis aeruginosa (strain NIES-843 / IAM M-2473).